Here is a 365-residue protein sequence, read N- to C-terminus: Galactoside alpha-(1,2)-fucosyltransferase 1 (365 aa).

Residues 1 to 8 (MWPLSHRH) are Cytoplasmic-facing. A helical; Signal-anchor for type II membrane protein transmembrane segment spans residues 9 to 25 (LCLAFLLVCVLSAISFF). Over 26-365 (LHIYQDSIRH…LSPLWTLAEP (340 aa)) the chain is Lumenal. Residues asparagine 65, asparagine 301, and asparagine 327 are each glycosylated (N-linked (GlcNAc...) asparagine).

It belongs to the glycosyltransferase 11 family.

It is found in the golgi apparatus. Its subcellular location is the golgi stack membrane. It catalyses the reaction a beta-D-galactosyl-(1-&gt;4)-N-acetyl-beta-D-glucosaminyl derivative + GDP-beta-L-fucose = an alpha-L-Fuc-(1-&gt;2)-beta-D-Gal-(1-&gt;4)-beta-D-GlcNAc derivative + GDP + H(+). It carries out the reaction a ganglioside GA1 + GDP-beta-L-fucose = a ganglioside Fuc-GA1 + GDP + H(+). The enzyme catalyses a beta-D-Gal-(1-&gt;3)-beta-D-GlcNAc-(1-&gt;3)-beta-D-Gal-(1-&gt;4)-beta-D-Glc-(1&lt;-&gt;1')-Cer(d18:1(4E)) + GDP-beta-L-fucose = alpha-L-fucosyl-(1-&gt;2)- beta-D-galactosyl-(1-&gt;3)-N-acetyl-beta-D-glucosaminyl-(1-&gt;3)-beta-D-galactosyl-(1-&gt;4)-beta-D-glucosyl-(1&lt;-&gt;1')-N-acylsphing-4-enine + GDP + H(+). The catalysed reaction is a neolactoside nLc4Cer(d18:1(4E)) + GDP-beta-L-fucose = a neolactoside IV(2)-alpha-Fuc-nLc4Cer(d18:1(4E)) + GDP + H(+). It catalyses the reaction a ganglioside GM1 + GDP-beta-L-fucose = a ganglioside Fuc-GM1 + GDP + H(+). It carries out the reaction beta-D-galactosyl-(1-&gt;3)-N-acetyl-D-galactosamine + GDP-beta-L-fucose = alpha-L-fucosyl-(1-&gt;2)-beta-D-galactosyl-(1-&gt;3)-N-acetyl-D-galactosamine + GDP + H(+). The protein operates within protein modification; protein glycosylation. Catalyzes the transfer of L-fucose, from a guanosine diphosphate-beta-L-fucose, to the terminal galactose residue of glycoconjugates through an alpha(1,2) linkage leading to H antigen synthesis that is an intermediate substrate in the synthesis of ABO blood group antigens. H antigen is essential for maturation of the glomerular layer of the main olfactory bulb, in cell migration and early cell-cell contacts during tumor associated angiogenesis. Preferentially fucosylates soluble lactose and to a lesser extent fucosylates glycolipids gangliosides GA1 and GM1a. In Mico humeralifer (Black and white tassel-ear marmoset), this protein is Galactoside alpha-(1,2)-fucosyltransferase 1.